We begin with the raw amino-acid sequence, 720 residues long: F-box/LRR-repeat MAX2 homolog (720 aa).

The 47-residue stretch at 14–60 (SSAILDLPEPLLLHILSFLTDVRSRHRAALACGRMRAAERATRSELS) folds into the F-box domain. LRR repeat units follow at residues 71–134 (LFLS…QNAF), 135–158 (IAAR…DPTT), 159–189 (LANL…PDGA), 190–218 (DLEP…DVVR), 219–247 (ALTT…FKSS), 248–279 (ELGP…VGDD), 280–316 (ALLS…ITVA), 317–344 (GLVA…EAAP), 345–372 (AMEA…KASW), 373–398 (LHLD…LTDA), 399–435 (SLAA…TLRP), 436–452 (TLKE…HTAE), 453–510 (CLTA…KCRY), 511–537 (MEFD…LLSP), 538–571 (LISA…PRTI), 572–606 (FGLS…GQMD), 607–644 (LSLW…SLTL), and 645–720 (PAVG…QIDD).

As to quaternary structure, associates to a SCF (SKP1-CUL1-F-box protein) E3 ubiquitin-protein ligase complex. Interacts with D14 in a strigolactone-dependent manner. Interacts with SKP1, SKP5 and SKP20. Expressed in leaves. Expressed in roots, culms, leaf blades, leaf sheaths, shoot bases and panicles.

It localises to the nucleus. Involved in strigolactone (SL) signaling. Required for responses to SLs and the establishment of arbuscular mycorrhiza symbiosis in rice. Strigolactone-dependent association of D3 with D14 and D53 (a repressor of SL signaling) triggers D53 ubiquitination and degradation. Controls tillering by suppressing axillary bud activity. Tiller is a specialized grain-bearing branch that is formed on the unelongated basal internode and grows independently of the mother stem (culm) by means of its own adventitious roots. The polypeptide is F-box/LRR-repeat MAX2 homolog (Oryza sativa subsp. japonica (Rice)).